A 347-amino-acid polypeptide reads, in one-letter code: D-alanine--D-alanine ligase (347 aa).

The ATP-grasp domain occupies 131-333; that stretch reads KRVLESAGIA…YPELIERLVD (203 aa). 161 to 216 contacts ATP; sequence EEKLAYPVFTKPSNMGSSVGISKSENQEELRPALELAFRYDSRVLVEQGVNAREIE. The Mg(2+) site is built by aspartate 287, glutamate 300, and asparagine 302.

The protein belongs to the D-alanine--D-alanine ligase family. The cofactor is Mg(2+). It depends on Mn(2+) as a cofactor.

The protein resides in the cytoplasm. It catalyses the reaction 2 D-alanine + ATP = D-alanyl-D-alanine + ADP + phosphate + H(+). Its pathway is cell wall biogenesis; peptidoglycan biosynthesis. Its function is as follows. Cell wall formation. The sequence is that of D-alanine--D-alanine ligase from Streptococcus pneumoniae (strain Taiwan19F-14).